The sequence spans 290 residues: Lipoyl synthase (290 aa).

Residues Cys-44, Cys-49, Cys-55, Cys-70, Cys-74, Cys-77, and Ser-281 each coordinate [4Fe-4S] cluster. Positions 56–270 (WRCGTATFMI…KQIGLEKGFS (215 aa)) constitute a Radical SAM core domain.

This sequence belongs to the radical SAM superfamily. Lipoyl synthase family. [4Fe-4S] cluster is required as a cofactor.

Its subcellular location is the cytoplasm. It carries out the reaction [[Fe-S] cluster scaffold protein carrying a second [4Fe-4S](2+) cluster] + N(6)-octanoyl-L-lysyl-[protein] + 2 oxidized [2Fe-2S]-[ferredoxin] + 2 S-adenosyl-L-methionine + 4 H(+) = [[Fe-S] cluster scaffold protein] + N(6)-[(R)-dihydrolipoyl]-L-lysyl-[protein] + 4 Fe(3+) + 2 hydrogen sulfide + 2 5'-deoxyadenosine + 2 L-methionine + 2 reduced [2Fe-2S]-[ferredoxin]. It participates in protein modification; protein lipoylation via endogenous pathway; protein N(6)-(lipoyl)lysine from octanoyl-[acyl-carrier-protein]: step 2/2. Functionally, catalyzes the radical-mediated insertion of two sulfur atoms into the C-6 and C-8 positions of the octanoyl moiety bound to the lipoyl domains of lipoate-dependent enzymes, thereby converting the octanoylated domains into lipoylated derivatives. The chain is Lipoyl synthase from Treponema denticola (strain ATCC 35405 / DSM 14222 / CIP 103919 / JCM 8153 / KCTC 15104).